We begin with the raw amino-acid sequence, 293 residues long: Pyridoxal 5'-phosphate synthase subunit PdxS (293 aa).

D23 is a binding site for D-ribose 5-phosphate. K80 (schiff-base intermediate with D-ribose 5-phosphate) is an active-site residue. G152 is a D-ribose 5-phosphate binding site. Residue R164 coordinates D-glyceraldehyde 3-phosphate. Residues G213 and 234 to 235 each bind D-ribose 5-phosphate; that span reads GS.

It belongs to the PdxS/SNZ family. In the presence of PdxT, forms a dodecamer of heterodimers.

The enzyme catalyses aldehydo-D-ribose 5-phosphate + D-glyceraldehyde 3-phosphate + L-glutamine = pyridoxal 5'-phosphate + L-glutamate + phosphate + 3 H2O + H(+). It functions in the pathway cofactor biosynthesis; pyridoxal 5'-phosphate biosynthesis. In terms of biological role, catalyzes the formation of pyridoxal 5'-phosphate from ribose 5-phosphate (RBP), glyceraldehyde 3-phosphate (G3P) and ammonia. The ammonia is provided by the PdxT subunit. Can also use ribulose 5-phosphate and dihydroxyacetone phosphate as substrates, resulting from enzyme-catalyzed isomerization of RBP and G3P, respectively. The protein is Pyridoxal 5'-phosphate synthase subunit PdxS of Herpetosiphon aurantiacus (strain ATCC 23779 / DSM 785 / 114-95).